Consider the following 450-residue polypeptide: mRNA cleavage and polyadenylation factor CLP1 (450 aa).

ATP is bound by residues E29, K67, and 137 to 142 (NSGKTS).

The protein belongs to the Clp1 family. Clp1 subfamily. As to quaternary structure, component of a pre-mRNA cleavage factor complex. Interacts directly with PCF11.

The protein resides in the nucleus. Its function is as follows. Required for endonucleolytic cleavage during polyadenylation-dependent pre-mRNA 3'-end formation. This is mRNA cleavage and polyadenylation factor CLP1 from Yarrowia lipolytica (strain CLIB 122 / E 150) (Yeast).